Consider the following 488-residue polypeptide: Glutamyl-tRNA(Gln) amidotransferase subunit A (488 aa).

Catalysis depends on charge relay system residues K77 and S152. S176 serves as the catalytic Acyl-ester intermediate.

It belongs to the amidase family. GatA subfamily. In terms of assembly, heterotrimer of A, B and C subunits.

The catalysed reaction is L-glutamyl-tRNA(Gln) + L-glutamine + ATP + H2O = L-glutaminyl-tRNA(Gln) + L-glutamate + ADP + phosphate + H(+). Functionally, allows the formation of correctly charged Gln-tRNA(Gln) through the transamidation of misacylated Glu-tRNA(Gln) in organisms which lack glutaminyl-tRNA synthetase. The reaction takes place in the presence of glutamine and ATP through an activated gamma-phospho-Glu-tRNA(Gln). The polypeptide is Glutamyl-tRNA(Gln) amidotransferase subunit A (Streptococcus pyogenes serotype M6 (strain ATCC BAA-946 / MGAS10394)).